Reading from the N-terminus, the 419-residue chain is UDP-N-acetylglucosamine 1-carboxyvinyltransferase (419 aa).

A phosphoenolpyruvate-binding site is contributed by Lys22–Asn23. Arg91 provides a ligand contact to UDP-N-acetyl-alpha-D-glucosamine. Cys115 functions as the Proton donor in the catalytic mechanism. Cys115 bears the 2-(S-cysteinyl)pyruvic acid O-phosphothioketal mark. UDP-N-acetyl-alpha-D-glucosamine contacts are provided by residues Arg120 to Leu124, Lys160 to Val163, Asp305, and Val327.

This sequence belongs to the EPSP synthase family. MurA subfamily.

It localises to the cytoplasm. The enzyme catalyses phosphoenolpyruvate + UDP-N-acetyl-alpha-D-glucosamine = UDP-N-acetyl-3-O-(1-carboxyvinyl)-alpha-D-glucosamine + phosphate. The protein operates within cell wall biogenesis; peptidoglycan biosynthesis. Cell wall formation. Adds enolpyruvyl to UDP-N-acetylglucosamine. This Salmonella gallinarum (strain 287/91 / NCTC 13346) protein is UDP-N-acetylglucosamine 1-carboxyvinyltransferase.